Consider the following 84-residue polypeptide: Putative membrane protein insertion efficiency factor (84 aa).

It belongs to the UPF0161 family.

The protein resides in the cell inner membrane. Functionally, could be involved in insertion of integral membrane proteins into the membrane. The chain is Putative membrane protein insertion efficiency factor from Shewanella sp. (strain ANA-3).